The primary structure comprises 502 residues: tRNA-specific adenosine deaminase 1 (502 aa).

The A to I editase domain maps to 63–501 (SMGTGTKCIG…IRNPPDYHQF (439 aa)). Histidine 87 lines the Zn(2+) pocket. Glutamate 89 serves as the catalytic Proton donor. 1D-myo-inositol hexakisphosphate-binding residues include arginine 93 and arginine 94. Zn(2+) is bound at residue cysteine 142. Serine 191 carries the post-translational modification Phosphoserine. Cysteine 299 lines the Zn(2+) pocket. Positions 302, 305, 435, and 470 each coordinate 1D-myo-inositol hexakisphosphate.

The protein belongs to the ADAT1 family. Requires 1D-myo-inositol hexakisphosphate as cofactor.

It catalyses the reaction adenosine(37) in tRNA(Ala) + H2O + H(+) = inosine(37) in tRNA(Ala) + NH4(+). In terms of biological role, specifically deaminates adenosine-37 to inosine in tRNA-Ala. The protein is tRNA-specific adenosine deaminase 1 (ADAT1) of Macaca fascicularis (Crab-eating macaque).